A 216-amino-acid polypeptide reads, in one-letter code: Small ribosomal subunit protein uS3c (216 aa).

The region spanning Ile43–Glu118 is the KH type-2 domain.

Belongs to the universal ribosomal protein uS3 family. As to quaternary structure, part of the 30S ribosomal subunit.

The protein resides in the plastid. The sequence is that of Small ribosomal subunit protein uS3c (rps3) from Cuscuta reflexa (Southern Asian dodder).